We begin with the raw amino-acid sequence, 359 residues long: tRNA-specific 2-thiouridylase MnmA (359 aa).

ATP is bound by residues 7–14 and L33; that span reads GLSGGVDS. C94 (nucleophile) is an active-site residue. C94 and C193 form a disulfide bridge. Residue G119 participates in ATP binding. The interval 143-145 is interaction with tRNA; it reads KDQ. The Cysteine persulfide intermediate role is filled by C193. Residues 298–299 are interaction with tRNA; that stretch reads RY.

This sequence belongs to the MnmA/TRMU family.

It is found in the cytoplasm. The enzyme catalyses S-sulfanyl-L-cysteinyl-[protein] + uridine(34) in tRNA + AH2 + ATP = 2-thiouridine(34) in tRNA + L-cysteinyl-[protein] + A + AMP + diphosphate + H(+). Catalyzes the 2-thiolation of uridine at the wobble position (U34) of tRNA, leading to the formation of s(2)U34. The chain is tRNA-specific 2-thiouridylase MnmA from Trichodesmium erythraeum (strain IMS101).